Consider the following 990-residue polypeptide: TonB-dependent receptor P26 (990 aa).

The TonB box signature appears at 86-93 (DEVVVIGY). Residues 97–213 (RKSDLTGSVS…ANGVVLVTTK (117 aa)) form the TBDR plug domain. The region spanning 220–990 (SSKPEVSANI…TITLGLNVTF (771 aa)) is the TBDR beta-barrel domain. Residues 878–902 (TPENPTSDIPRAGGDSVTGTPPNSA) are disordered. The short motif at 974–990 (GSYPNPRTITLGLNVTF) is the TonB C-terminal box element.

Belongs to the TonB-dependent receptor family.

The protein localises to the cell outer membrane. In terms of biological role, tonB-dependent receptor probably involved in ulvan degradation. Ulvan is the main polysaccharide component of the Ulvales (green seaweed) cell wall. It is composed of disaccharide building blocks comprising 3-sulfated rhamnose (Rha3S) linked to D-glucuronic acid (GlcA), L-iduronic acid (IduA), or D-xylose (Xyl). The TonB-dependent receptor may mediate transport of ulvan oligosaccharides from the surface of the outer membrane to the periplasm for subsequent degradation. This chain is TonB-dependent receptor P26, found in Formosa agariphila (strain DSM 15362 / KCTC 12365 / LMG 23005 / KMM 3901 / M-2Alg 35-1).